The primary structure comprises 313 residues: C-type lectin domain-containing protein 162 (313 aa).

The signal sequence occupies residues 1-17 (MNIFTLLFIYFLSDTVA). Residues N28 and N41 are each glycosylated (N-linked (GlcNAc...) asparagine). The C-type lectin domain occupies 28–145 (NATGCFQFFR…DAMFLPFVCE (118 aa)). C49 and C144 are oxidised to a cystine. N-linked (GlcNAc...) asparagine glycosylation is present at N213. Residues 244 to 313 (VSQTETEMSR…RSKTIQISRG (70 aa)) are disordered. Residues 250-259 (EMSRSRKEKE) are compositionally biased toward basic and acidic residues. N279 and N300 each carry an N-linked (GlcNAc...) asparagine glycan. A compositionally biased stretch (basic and acidic residues) spans 291-304 (SKEKREREENETIR).

It is found in the secreted. In Caenorhabditis elegans, this protein is C-type lectin domain-containing protein 162 (clec-162).